Reading from the N-terminus, the 86-residue chain is uncharacterized protein (86 aa).

The first 22 residues, 1–22 (MKTINTVVAAMALSTLSFGVFA), serve as a signal peptide directing secretion.

It belongs to the BhsA/McbA family.

The protein resides in the periplasm. This is an uncharacterized protein from Escherichia coli O6:H1 (strain CFT073 / ATCC 700928 / UPEC).